The sequence spans 87 residues: U3-theraphotoxin-Hhn1a 5 (87 aa).

Residues 1–24 (MVNMKASMFLTFAGLVLLFVVCYA) form the signal peptide. A propeptide spanning residues 25 to 52 (SESEEKEFPKEMLSSIFAVDNDFKQEER) is cleaved from the precursor. Cystine bridges form between C54–C67, C61–C72, and C66–C79.

Belongs to the neurotoxin 10 (Hwtx-1) family. 51 (Hntx-8) subfamily. Hntx-8 sub-subfamily. In terms of tissue distribution, expressed by the venom gland.

The protein localises to the secreted. Its function is as follows. Ion channel inhibitor. The protein is U3-theraphotoxin-Hhn1a 5 of Cyriopagopus hainanus (Chinese bird spider).